The following is a 395-amino-acid chain: GPI-anchor transamidase (395 aa).

Residues 1-27 form the signal peptide; it reads MVGTWFLCRGFTTLAGLLLLPFGSLAA. Topologically, residues 28–368 are lumenal; the sequence is SQIEDQAEQF…PKLKDWHPPG (341 aa). Ca(2+) is bound by residues aspartate 79, isoleucine 82, glutamate 118, and aspartate 120. Histidine 164 (proton donor) is an active-site residue. The active-site Nucleophile; acyl-thioester intermediate is cysteine 206. A protein is bound by residues cysteine 206, serine 232, and serine 234. The interval 231 to 236 is autoinhibitory loop; that stretch reads DSLSHQ. A disulfide bond links cysteine 275 and cysteine 280. A helical membrane pass occupies residues 369–385; the sequence is GFILGLWALIIMVFFKT. Residues 386–395 are Cytoplasmic-facing; that stretch reads YGIKHMKFIF.

Belongs to the peptidase C13 family. Heteropentamer. Part of the GPI-anchor transamidase complex, consisting of PIGK, PIGT, PIGS, PIGU and GAA1. Interacts with GPAA1. Interacts with PIGT; this interaction, via a disulfide link, stabilizes the expression of GAA1 and PIGK and links them to PIGS. Post-translationally, the disulfide bond between PIGK/GPI8 and PIGT is important for normal enzyme activity.

The protein resides in the endoplasmic reticulum membrane. The protein operates within glycolipid biosynthesis; glycosylphosphatidylinositol-anchor biosynthesis. With respect to regulation, in the absence of proproteins substrates, exists in an inactive state with a disrupted catalytic site by an autoinhibitory loop. The binding of proprotein substrates, particularly the CSP region, to GPI-T triggers concerted conformational changes that alleviate the inhibition by the autoinhibitory loop. Meanwhile, proprotein residues near the omega- site induce the formation of a catalytic cleft for catalysis, following which the products are released and GPI-T reverts to the inactive state. Functionally, catalytic subunit of the glycosylphosphatidylinositol-anchor (GPI-anchor) transamidase (GPI-T) complex that catalyzes the formation of the linkage between a proprotein and a GPI-anchor and participates in GPI anchored protein biosynthesis. Recognizes diverse proproteins at a C-terminal signal peptide (CSP) region that lacks consensus sequence and replaces it with a GPI-anchor via a transamidation reaction. Transamidation catalysis reaction follows a two-phase mechanism. In the acyl-enzyme phase, the carbonyl group of the proproteins's omega-site undergoes a nucleophilic attack forming an enzyme-substrate thioester bond. Followed by a general acid catalysis that allows CSP releasing, regenerating the carbonyl, and forming the acyl-enzyme intermediate. In the GPI-anchor attachment phase, the amino group of the GPI-anchor's ethanolamine phosphate, the one on third mannose (EtNP3), mediates a nucleophilic attack on the carbonyl of the acyl-enzyme intermediate, replacing the CSP, allowing GPI-anchor attachment to the omega-residue, therefore forming the product and freeing the enzyme. The sequence is that of GPI-anchor transamidase from Sus scrofa (Pig).